The sequence spans 582 residues: Aspartate--tRNA ligase (582 aa).

An L-aspartate-binding site is contributed by E174. The segment at 198–201 (QITK) is aspartate. R220 serves as a coordination point for L-aspartate. Residues 220-222 (RDE) and Q229 each bind ATP. Residue H443 coordinates L-aspartate. An ATP-binding site is contributed by E477. L-aspartate is bound at residue R484. 529 to 532 (GLDR) provides a ligand contact to ATP.

This sequence belongs to the class-II aminoacyl-tRNA synthetase family. Type 1 subfamily. In terms of assembly, homodimer.

The protein resides in the cytoplasm. The enzyme catalyses tRNA(Asp) + L-aspartate + ATP = L-aspartyl-tRNA(Asp) + AMP + diphosphate. Its function is as follows. Catalyzes the attachment of L-aspartate to tRNA(Asp) in a two-step reaction: L-aspartate is first activated by ATP to form Asp-AMP and then transferred to the acceptor end of tRNA(Asp). This chain is Aspartate--tRNA ligase, found in Streptococcus pyogenes serotype M28 (strain MGAS6180).